The chain runs to 946 residues: Bifunctional glutamine synthetase adenylyltransferase/adenylyl-removing enzyme (946 aa).

Positions 1–440 (MKPLSSPLQQ…VFNELIGDDE (440 aa)) are adenylyl removase. An adenylyl transferase region spans residues 449–946 (SEHWRELWQD…ASWQKWLVAG (498 aa)).

This sequence belongs to the GlnE family. The cofactor is Mg(2+).

The enzyme catalyses [glutamine synthetase]-O(4)-(5'-adenylyl)-L-tyrosine + phosphate = [glutamine synthetase]-L-tyrosine + ADP. It catalyses the reaction [glutamine synthetase]-L-tyrosine + ATP = [glutamine synthetase]-O(4)-(5'-adenylyl)-L-tyrosine + diphosphate. Its function is as follows. Involved in the regulation of glutamine synthetase GlnA, a key enzyme in the process to assimilate ammonia. When cellular nitrogen levels are high, the C-terminal adenylyl transferase (AT) inactivates GlnA by covalent transfer of an adenylyl group from ATP to specific tyrosine residue of GlnA, thus reducing its activity. Conversely, when nitrogen levels are low, the N-terminal adenylyl removase (AR) activates GlnA by removing the adenylyl group by phosphorolysis, increasing its activity. The regulatory region of GlnE binds the signal transduction protein PII (GlnB) which indicates the nitrogen status of the cell. This chain is Bifunctional glutamine synthetase adenylyltransferase/adenylyl-removing enzyme, found in Citrobacter koseri (strain ATCC BAA-895 / CDC 4225-83 / SGSC4696).